The primary structure comprises 907 residues: Putative ATP-dependent DNA helicase DDX11-like protein 8 (907 aa).

Positions 9-447 constitute a Helicase ATP-binding domain; it reads GAIHFPFPFT…KNLMYLKQIL (439 aa). 44 to 51 serves as a coordination point for ATP; the sequence is SPTGTGKS. The disordered stretch occupies residues 202 to 222; it reads YESDEEKKVASGHRVDEDEDD. Positions 206-217 are enriched in basic and acidic residues; that stretch reads EEKKVASGHRVD. The residue at position 264 (Ser264) is a Phosphoserine. The [4Fe-4S] cluster site is built by Cys269 and Cys287. A compositionally biased stretch (basic and acidic residues) spans 291-306; that stretch reads QRSRHEKKKGAEEEKP. Positions 291 to 314 are disordered; sequence QRSRHEKKKGAEEEKPKRRRQEKQ. 2 residues coordinate [4Fe-4S] cluster: Cys317 and Cys352. Residues 395 to 398 carry the DEAH motif; it reads DEAH.

Belongs to the DEAD box helicase family. DEAH subfamily. DDX11/CHL1 sub-subfamily. [4Fe-4S] cluster is required as a cofactor.

The protein localises to the nucleus. It is found in the nucleolus. In terms of biological role, putative DNA helicase. In Homo sapiens (Human), this protein is Putative ATP-dependent DNA helicase DDX11-like protein 8 (DDX11L8).